Here is a 78-residue protein sequence, read N- to C-terminus: Small integral membrane protein 10-like protein 2A (78 aa).

The chain is Small integral membrane protein 10-like protein 2A from Homo sapiens (Human).